A 292-amino-acid chain; its full sequence is 4'-phosphopantetheinyl transferase 1 (292 aa).

This sequence belongs to the P-Pant transferase superfamily.

The catalysed reaction is apo-[ACP] + CoA = holo-[ACP] + adenosine 3',5'-bisphosphate + H(+). In terms of biological role, transfers the 4'-phosphopantetheine moiety from coenzyme A to a Ser of an acyl-carrier-protein. The enzyme is able to transfer the cofactor to a broad range of enzymes with acyl- or peptidyl-carrier protein domains. Required for primary biological processes such as growth and asexual/sexual development, and activates target enzymes involved in the synthesis of metabolites such as fatty acids, nonribosomal peptides and polyketides such as the gamma-pyrones fusapyrone (FPY) and deoxyfusapyrone (dFPY). The protein is 4'-phosphopantetheinyl transferase 1 of Fusarium mangiferae (Mango malformation disease fungus).